We begin with the raw amino-acid sequence, 360 residues long: Chorismate synthase (360 aa).

Arg-46 lines the NADP(+) pocket. FMN-binding positions include 123–125, 235–236, Gly-275, 290–294, and Arg-316; these read RSS, NA, and KPTPS.

It belongs to the chorismate synthase family. In terms of assembly, homotetramer. Requires FMNH2 as cofactor.

It carries out the reaction 5-O-(1-carboxyvinyl)-3-phosphoshikimate = chorismate + phosphate. It participates in metabolic intermediate biosynthesis; chorismate biosynthesis; chorismate from D-erythrose 4-phosphate and phosphoenolpyruvate: step 7/7. Its function is as follows. Catalyzes the anti-1,4-elimination of the C-3 phosphate and the C-6 proR hydrogen from 5-enolpyruvylshikimate-3-phosphate (EPSP) to yield chorismate, which is the branch point compound that serves as the starting substrate for the three terminal pathways of aromatic amino acid biosynthesis. This reaction introduces a second double bond into the aromatic ring system. This chain is Chorismate synthase, found in Wolinella succinogenes (strain ATCC 29543 / DSM 1740 / CCUG 13145 / JCM 31913 / LMG 7466 / NCTC 11488 / FDC 602W) (Vibrio succinogenes).